A 1103-amino-acid polypeptide reads, in one-letter code: Centrosomal protein of 126 kDa (1103 aa).

Positions 1-12 (MLAGRPGAQSAG) are enriched in low complexity. Positions 1 to 36 (MLAGRPGAQSAGAGVGAGPPDAPGARDGGGRPRPGA) are disordered. 2 coiled-coil regions span residues 43 to 116 (HLEK…FQRA) and 182 to 222 (QKHL…KLLE). Disordered stretches follow at residues 380-409 (NTAESNVVRASDPTEGAVQRERPAQMESPT) and 723-812 (ESKA…PGQS). Residues 723–735 (ESKAPVHASDSKT) are compositionally biased toward basic and acidic residues. Positions 736 to 748 (QKTKPQRGVKFTR) are enriched in basic residues. Composition is skewed to polar residues over residues 763–784 (RKPTVSQPQTSSKANTVAQTQG) and 798–812 (NIKSGKNMQVSPGQS).

In terms of assembly, interacts with DCTN1.

The protein resides in the midbody. The protein localises to the cytoplasm. It is found in the cytoskeleton. Its subcellular location is the microtubule organizing center. It localises to the centrosome. The protein resides in the cilium basal body. Participate in cytokinesis. Necessary for microtubules and mitotic spindle organization. Involved in primary cilium formation. The protein is Centrosomal protein of 126 kDa of Mus musculus (Mouse).